The following is a 1322-amino-acid chain: FERM and PDZ domain-containing protein 4 (1322 aa).

The WW domain occupies glutamine 33–leucine 66. Residues lysine 78–tyrosine 155 enclose the PDZ domain. The FERM domain occupies asparagine 204–arginine 519. Disordered stretches follow at residues alanine 809–valine 847, serine 900–lysine 927, glutamate 952–valine 983, arginine 1027–asparagine 1080, serine 1105–aspartate 1148, alanine 1160–leucine 1180, and histidine 1207–serine 1227. Positions glutamate 902–glutamate 921 are enriched in low complexity. Low complexity predominate over residues asparagine 1041–threonine 1054. Over residues threonine 1067–asparagine 1080 the composition is skewed to polar residues. The span at histidine 1207–serine 1217 shows a compositional bias: polar residues.

In terms of assembly, interacts (via C-terminus) with DLG1, DLG2, DLG3 and DLG4/PSD95. Interacts (via N-terminus) with ARHGEF7; the interaction is mediated by the PDZ domain. Interacts with GPSM2 (via TPR repeat region).

It localises to the cell projection. The protein localises to the dendritic spine. In terms of biological role, positive regulator of dendritic spine morphogenesis and density. Required for the maintenance of excitatory synaptic transmission. Binds phosphatidylinositol 4,5-bisphosphate. The sequence is that of FERM and PDZ domain-containing protein 4 (FRMPD4) from Homo sapiens (Human).